The sequence spans 61 residues: Large ribosomal subunit protein bL28 (61 aa).

The segment at M1–R26 is disordered.

This sequence belongs to the bacterial ribosomal protein bL28 family.

The polypeptide is Large ribosomal subunit protein bL28 (Ligilactobacillus salivarius (strain UCC118) (Lactobacillus salivarius)).